We begin with the raw amino-acid sequence, 100 residues long: MQLTPREVEKLMIYTLSDVAFKRKARGLKLNYPEAVSIITETAMEGARDGKSVEDVMKEASKVLTKDDVMDGVADLIPNVQVEAIFTDGSRLVTVHDPIK.

The protein belongs to the urease gamma subunit family. Heterotrimer of UreA (gamma), UreB (beta) and UreC (alpha) subunits. Three heterotrimers associate to form the active enzyme.

The protein localises to the cytoplasm. The enzyme catalyses urea + 2 H2O + H(+) = hydrogencarbonate + 2 NH4(+). It functions in the pathway nitrogen metabolism; urea degradation; CO(2) and NH(3) from urea (urease route): step 1/1. Functionally, expression of the urease operon increases the likelihood of bacterial survival by contributing to acid resistance in vitro and in vivo in BALB/c mice. Y.enterocolitica enters the body via an oral path and must survive the acidic stomach before being able to colonize the intestinal mucosa. The protein is Urease subunit gamma of Yersinia enterocolitica.